We begin with the raw amino-acid sequence, 126 residues long: Small ribosomal subunit protein uS13 (126 aa).

Residues 96–126 (LPVHGQRTHTNARTRKGPRRAIAGKKKAGKK) are disordered.

It belongs to the universal ribosomal protein uS13 family. In terms of assembly, part of the 30S ribosomal subunit. Forms a loose heterodimer with protein S19. Forms two bridges to the 50S subunit in the 70S ribosome.

In terms of biological role, located at the top of the head of the 30S subunit, it contacts several helices of the 16S rRNA. In the 70S ribosome it contacts the 23S rRNA (bridge B1a) and protein L5 of the 50S subunit (bridge B1b), connecting the 2 subunits; these bridges are implicated in subunit movement. Contacts the tRNAs in the A and P-sites. The polypeptide is Small ribosomal subunit protein uS13 (Frankia alni (strain DSM 45986 / CECT 9034 / ACN14a)).